Reading from the N-terminus, the 423-residue chain is D-tagatose-1,6-bisphosphate aldolase subunit GatZ (423 aa).

Belongs to the GatZ/KbaZ family. GatZ subfamily. In terms of assembly, forms a complex with GatY.

The protein operates within carbohydrate metabolism; D-tagatose 6-phosphate degradation; D-glyceraldehyde 3-phosphate and glycerone phosphate from D-tagatose 6-phosphate: step 2/2. Functionally, component of the tagatose-1,6-bisphosphate aldolase GatYZ that is required for full activity and stability of the Y subunit. Could have a chaperone-like function for the proper and stable folding of GatY. When expressed alone, GatZ does not show any aldolase activity. Is involved in the catabolism of galactitol. The sequence is that of D-tagatose-1,6-bisphosphate aldolase subunit GatZ from Salmonella agona (strain SL483).